The following is a 642-amino-acid chain: Threonine--tRNA ligase (642 aa).

One can recognise a TGS domain in the interval 1-61 (MPVITLPDGS…ETDAELSIIT (61 aa)). The interval 243–534 (DHRKIGKQLD…LIEEYAGRFP (292 aa)) is catalytic. Residues C334, H385, and H511 each coordinate Zn(2+).

The protein belongs to the class-II aminoacyl-tRNA synthetase family. In terms of assembly, homodimer. Requires Zn(2+) as cofactor.

Its subcellular location is the cytoplasm. The enzyme catalyses tRNA(Thr) + L-threonine + ATP = L-threonyl-tRNA(Thr) + AMP + diphosphate + H(+). In terms of biological role, catalyzes the attachment of threonine to tRNA(Thr) in a two-step reaction: L-threonine is first activated by ATP to form Thr-AMP and then transferred to the acceptor end of tRNA(Thr). Also edits incorrectly charged L-seryl-tRNA(Thr). In Shewanella oneidensis (strain ATCC 700550 / JCM 31522 / CIP 106686 / LMG 19005 / NCIMB 14063 / MR-1), this protein is Threonine--tRNA ligase.